The chain runs to 611 residues: Beta-hexosaminidase (611 aa).

The protein belongs to the glycosyl hydrolase 20 family. In terms of assembly, homodimer.

It localises to the periplasm. The catalysed reaction is Hydrolysis of terminal non-reducing N-acetyl-D-hexosamine residues in N-acetyl-beta-D-hexosaminides.. It participates in glycan degradation; chitin degradation. Its activity is regulated as follows. Inhibited by mercuric ions, PNP-beta-Glc, PNP-beta-Gal, PNP-alpha-GlcNAc, and PNP-beta-S-GlcNAc. In terms of biological role, hydrolyzes aryl-N-acetyl-beta-D-glucosaminide (aryl-beta-GlcNAc), aryl-beta-GalNAc and chitin oligosaccharides. Can hydrolyze rapidly the artificial substrates p-nitrophenyl-N-acetyl-beta-D-glucosaminide (PNP-beta-GlcNAc) and 4-methylumbelliferyl-beta-GlcNAc, and is slightly active on p-nitrophenyl-beta-GalNAc. This enzyme is not processive, i.e. when it hydrolyzes (GlcNAc)n, both products, (Glc-NAc)n-1 and the terminal GlcNAc, are released before the enzyme attacks a second molecule of (GlcNAc)n or (GlcNAc)n-1. This is Beta-hexosaminidase from Vibrio furnissii.